Reading from the N-terminus, the 490-residue chain is MSRMAEQQLYIHGGYTSATSGRTFETINPANGNVLATVQAAGREDVDRAVKSAQQGQKIWAAMTAMERSRILRRAVDILRERNDELAKLETLDTGKAYSETSTVDIVTGADVLEYYAGLIPALEGSQIPLRETSFVYTRREPLGVVAGIGAWNYPIQIALWKSAPALAAGNAMIFKPSEVTPLTALKLAEIYSEAGLPDGVFNVLPGGGAETGQYLTEHPGIAKVSFTGGVASGKKVMANSAASSLKEVTMELGGKSPLIVFDDADLDLAADIAMMANFFSSGQVCTNGTRVFVPAKCKAAFEQKILARVERIRAGDVFDPQTNFGPLVSFPHRDNVLRYIAKGKEEGARVLCGGDVLKGDGFDNGAWVAPTVFTDCRDEMTIVREEIFGPVMSLLTYESEDEVIRRANDTDYGLAAGIVTADLNRAHRVMHQLEAGICWINTWGESPAEMPVGGYKHSGIGRENGVMTLQSYTQVKSIQVEMAKFQSIF.

Positions 26, 27, and 93 each coordinate K(+). NAD(+) is bound at residue 150-152; it reads GAW. Catalysis depends on Lys-162, which acts as the Charge relay system. 176–179 is a binding site for NAD(+); it reads KPSE. Val-180 provides a ligand contact to K(+). 230–233 contributes to the NAD(+) binding site; it reads GVAS. Leu-246 provides a ligand contact to K(+). Catalysis depends on Glu-252, which acts as the Proton acceptor. Residues Gly-254, Cys-286, and Glu-387 each contribute to the NAD(+) site. The active-site Nucleophile is Cys-286. The residue at position 286 (Cys-286) is a Cysteine sulfenic acid (-SOH). K(+) is bound by residues Lys-457 and Gly-460. Catalysis depends on Glu-464, which acts as the Charge relay system.

Belongs to the aldehyde dehydrogenase family. In terms of assembly, dimer of dimers. It depends on K(+) as a cofactor.

It catalyses the reaction betaine aldehyde + NAD(+) + H2O = glycine betaine + NADH + 2 H(+). The protein operates within amine and polyamine biosynthesis; betaine biosynthesis via choline pathway; betaine from betaine aldehyde: step 1/1. In terms of biological role, involved in the biosynthesis of the osmoprotectant glycine betaine. Catalyzes the irreversible oxidation of betaine aldehyde to the corresponding acid. The protein is Betaine aldehyde dehydrogenase of Shigella flexneri serotype 5b (strain 8401).